Here is a 517-residue protein sequence, read N- to C-terminus: ATP synthase subunit beta (517 aa).

An ATP-binding site is contributed by G167–T174. Basic and acidic residues-rich tracts occupy residues A475 to D484 and D495 to D508. Positions A475–A517 are disordered.

This sequence belongs to the ATPase alpha/beta chains family. F-type ATPases have 2 components, CF(1) - the catalytic core - and CF(0) - the membrane proton channel. CF(1) has five subunits: alpha(3), beta(3), gamma(1), delta(1), epsilon(1). CF(0) has three main subunits: a(1), b(2) and c(9-12). The alpha and beta chains form an alternating ring which encloses part of the gamma chain. CF(1) is attached to CF(0) by a central stalk formed by the gamma and epsilon chains, while a peripheral stalk is formed by the delta and b chains.

It localises to the cell membrane. It carries out the reaction ATP + H2O + 4 H(+)(in) = ADP + phosphate + 5 H(+)(out). Functionally, produces ATP from ADP in the presence of a proton gradient across the membrane. The catalytic sites are hosted primarily by the beta subunits. This is ATP synthase subunit beta from Mycobacterium sp. (strain JLS).